Here is a 352-residue protein sequence, read N- to C-terminus: CMP-sialic acid transporter 4 (352 aa).

Residues 1–51 are Cytoplasmic-facing; that stretch reads MEYRKIKDEDDHDVASDIESVKGKSHTVASSNIAMATLGVGSSERINWKRK. A helical membrane pass occupies residues 52-72; it reads GVVTCALTILTSSQAILIVWS. Residues 73-81 are Lumenal-facing; the sequence is KRAGKYEYS. Residues 82 to 102 traverse the membrane as a helical segment; it reads VTTANFLVGTLKCALSLLALT. Topologically, residues 103-124 are cytoplasmic; sequence RIWKNEGVTDDNRLSTTFDEVK. A helical transmembrane segment spans residues 125-145; the sequence is VFPIPAALYLFKNLLQYYIFA. Topologically, residues 146-174 are lumenal; sequence YVDAPGYQILKNLNIISTGVLYRIILKRK. A helical transmembrane segment spans residues 175 to 195; it reads LSEIQWAGFILLCCGCTTAQL. At 196-210 the chain is on the cytoplasmic side; that stretch reads NSNSDRVLQTSLPGW. A helical transmembrane segment spans residues 211 to 231; the sequence is TMAIVMALLSGFAGVYTEAII. The Lumenal segment spans residues 232-238; that stretch reads KKRPSRN. Residues 239–259 form a helical membrane-spanning segment; that stretch reads INVQNFWLYVFGMAFNAVAIV. The Cytoplasmic portion of the chain corresponds to 260 to 276; sequence IQDFDAVANKGFFHGYS. A helical transmembrane segment spans residues 277 to 297; the sequence is FITLLMILNHALSGIAVSMVM. The Lumenal segment spans residues 298-313; that stretch reads KYADNIVKVYSTSVAM. The chain crosses the membrane as a helical span at residues 314–334; that stretch reads LLTAVVSVFLFNFHLSLAFFL. Over 335 to 352 the chain is Cytoplasmic; sequence GSTVVSVSVYLHSAGKLR.

The protein belongs to the nucleotide-sugar transporter family. CMP-Sialate:CMP antiporter (TC 2.A.7.12) subfamily.

The protein resides in the golgi apparatus membrane. Its function is as follows. Sugar transporter involved in the transport of CMP-sialic acid from the cytoplasm into the Golgi. Essential protein. This chain is CMP-sialic acid transporter 4, found in Arabidopsis thaliana (Mouse-ear cress).